The chain runs to 87 residues: Small polypeptide DEVIL 11 (87 aa).

Over residues 1 to 11 (MASSSSLTRSG) the composition is skewed to polar residues. Residues 1–47 (MASSSSLTRSGSVHLDEKWKLSKKDGGASRITRSSSTSSSSFNGKKQ) are disordered. Residues 14-27 (HLDEKWKLSKKDGG) are compositionally biased toward basic and acidic residues. The segment covering 29–41 (SRITRSSSTSSSS) has biased composition (low complexity). Residues 51 to 82 (AFTRKCARLVKEQRARFYIMRRCVIMLICWRD) form a required for DVL/RTFL small polypeptide activity region. The helical transmembrane segment at 64–80 (RARFYIMRRCVIMLICW) threads the bilayer. Asn-83 carries N-linked (GlcNAc...) asparagine glycosylation.

This sequence belongs to the DVL/RTFL small polypeptides family.

It is found in the cell membrane. In terms of biological role, small polypeptide acting as a regulatory molecule which coordinates cellular responses required for differentiation, growth and development, probably by restricting polar cell proliferation in lateral organs and coordinating socket cell recruitment and differentiation at trichome sites. The sequence is that of Small polypeptide DEVIL 11 from Arabidopsis thaliana (Mouse-ear cress).